The chain runs to 394 residues: tRNA-specific 2-thiouridylase MnmA (394 aa).

ATP is bound by residues 30–37 (AMSGGVDS) and leucine 56. The active-site Nucleophile is the cysteine 124. Cysteine 124 and cysteine 220 are oxidised to a cystine. Glycine 148 provides a ligand contact to ATP. The interaction with tRNA stretch occupies residues 170-172 (RDQ). Cysteine 220 functions as the Cysteine persulfide intermediate in the catalytic mechanism.

Belongs to the MnmA/TRMU family.

The protein localises to the cytoplasm. It carries out the reaction S-sulfanyl-L-cysteinyl-[protein] + uridine(34) in tRNA + AH2 + ATP = 2-thiouridine(34) in tRNA + L-cysteinyl-[protein] + A + AMP + diphosphate + H(+). Its function is as follows. Catalyzes the 2-thiolation of uridine at the wobble position (U34) of tRNA, leading to the formation of s(2)U34. The chain is tRNA-specific 2-thiouridylase MnmA from Hyphomonas neptunium (strain ATCC 15444).